The chain runs to 125 residues: Small ribosomal subunit protein uS12m (125 aa).

2 disordered regions span residues 1–29 (MPTK…QCPQ) and 105–125 (LGIP…PKSK). Residues 10–23 (HGREEKQRTDRTRA) show a composition bias toward basic and acidic residues.

Belongs to the universal ribosomal protein uS12 family.

It is found in the mitochondrion. Functionally, protein S12 is involved in the translation initiation step. This Oryza sativa subsp. japonica (Rice) protein is Small ribosomal subunit protein uS12m (RPS12).